Here is a 525-residue protein sequence, read N- to C-terminus: Probable pectinesterase/pectinesterase inhibitor 44 (525 aa).

The first 19 residues, 1-19, serve as a signal peptide directing secretion; it reads MSCLKYFLILLMLGLCVSS. Residues 30 to 153 are pectinesterase inhibitor 44; the sequence is VPASEFVSSI…YSMLRELLPL (124 aa). A glycan (N-linked (GlcNAc...) asparagine) is linked at N98. The interval 157–192 is disordered; that stretch reads EQKPKAVSKPGPIAKGPKAPPGRKLRDTDEDESLQF. The tract at residues 212–509 is pectinesterase 44; that stretch reads DVSVALDGTG…FTVSQFIKGN (298 aa). Residues N222 and N278 are each glycosylated (N-linked (GlcNAc...) asparagine). T287 and Q317 together coordinate substrate. D340 (proton donor; for pectinesterase activity) is an active-site residue. The cysteines at positions 354 and 374 are disulfide-linked. Residue D361 is the Nucleophile; for pectinesterase activity of the active site. N-linked (GlcNAc...) asparagine glycosylation is found at N409 and N421. Substrate contacts are provided by R429 and W431. N443, N492, and N499 each carry an N-linked (GlcNAc...) asparagine glycan.

In the N-terminal section; belongs to the PMEI family. It in the C-terminal section; belongs to the pectinesterase family. Expressed in siliques.

The protein localises to the secreted. It localises to the cell wall. The catalysed reaction is [(1-&gt;4)-alpha-D-galacturonosyl methyl ester](n) + n H2O = [(1-&gt;4)-alpha-D-galacturonosyl](n) + n methanol + n H(+). Its pathway is glycan metabolism; pectin degradation; 2-dehydro-3-deoxy-D-gluconate from pectin: step 1/5. Its function is as follows. Acts in the modification of cell walls via demethylesterification of cell wall pectin. The chain is Probable pectinesterase/pectinesterase inhibitor 44 (PME44) from Arabidopsis thaliana (Mouse-ear cress).